Here is a 911-residue protein sequence, read N- to C-terminus: Protein translocase subunit SecA (911 aa).

Residues Gln87, 105 to 109, and Asp513 contribute to the ATP site; that span reads GEGKT. A disordered region spans residues 853-911; the sequence is IQLQHEQVSGLEPEAGEAPSAGEPRSEQPYVRAGRKVGRNDPCPCGSGKKFKACHGKLG. Residues 862 to 875 show a composition bias toward low complexity; sequence GLEPEAGEAPSAGE. Residues Cys895, Cys897, Cys906, and His907 each coordinate Zn(2+). Residues 901–911 are compositionally biased toward basic residues; it reads KKFKACHGKLG.

Belongs to the SecA family. Monomer and homodimer. Part of the essential Sec protein translocation apparatus which comprises SecA, SecYEG and auxiliary proteins SecDF-YajC and YidC. Zn(2+) serves as cofactor.

The protein resides in the cell inner membrane. It localises to the cytoplasm. The enzyme catalyses ATP + H2O + cellular proteinSide 1 = ADP + phosphate + cellular proteinSide 2.. Functionally, part of the Sec protein translocase complex. Interacts with the SecYEG preprotein conducting channel. Has a central role in coupling the hydrolysis of ATP to the transfer of proteins into and across the cell membrane, serving both as a receptor for the preprotein-SecB complex and as an ATP-driven molecular motor driving the stepwise translocation of polypeptide chains across the membrane. This is Protein translocase subunit SecA from Teredinibacter turnerae (strain ATCC 39867 / T7901).